We begin with the raw amino-acid sequence, 615 residues long: Dihydroxy-acid dehydratase (615 aa).

Asp-81 is a binding site for Mg(2+). Residue Cys-122 coordinates [2Fe-2S] cluster. The Mg(2+) site is built by Asp-123 and Lys-124. Residue Lys-124 is modified to N6-carboxylysine. A [2Fe-2S] cluster-binding site is contributed by Cys-195. Mg(2+) is bound at residue Glu-491. Catalysis depends on Ser-517, which acts as the Proton acceptor.

Belongs to the IlvD/Edd family. As to quaternary structure, homodimer. Requires [2Fe-2S] cluster as cofactor. It depends on Mg(2+) as a cofactor.

The enzyme catalyses (2R)-2,3-dihydroxy-3-methylbutanoate = 3-methyl-2-oxobutanoate + H2O. It carries out the reaction (2R,3R)-2,3-dihydroxy-3-methylpentanoate = (S)-3-methyl-2-oxopentanoate + H2O. It participates in amino-acid biosynthesis; L-isoleucine biosynthesis; L-isoleucine from 2-oxobutanoate: step 3/4. Its pathway is amino-acid biosynthesis; L-valine biosynthesis; L-valine from pyruvate: step 3/4. Functions in the biosynthesis of branched-chain amino acids. Catalyzes the dehydration of (2R,3R)-2,3-dihydroxy-3-methylpentanoate (2,3-dihydroxy-3-methylvalerate) into 2-oxo-3-methylpentanoate (2-oxo-3-methylvalerate) and of (2R)-2,3-dihydroxy-3-methylbutanoate (2,3-dihydroxyisovalerate) into 2-oxo-3-methylbutanoate (2-oxoisovalerate), the penultimate precursor to L-isoleucine and L-valine, respectively. This Pseudoalteromonas atlantica (strain T6c / ATCC BAA-1087) protein is Dihydroxy-acid dehydratase.